The following is a 350-amino-acid chain: DNA-directed RNA polymerase subunit alpha (350 aa).

The tract at residues 1 to 226 (MLISQRPTLS…ELFGLARELN (226 aa)) is alpha N-terminal domain (alpha-NTD). Positions 241–350 (ADHIASFALP…NQDYAETEQL (110 aa)) are alpha C-terminal domain (alpha-CTD). The segment at 328–350 (GTWTSDAGYDLDDNQDYAETEQL) is disordered. Residues 336–350 (YDLDDNQDYAETEQL) are compositionally biased toward acidic residues.

It belongs to the RNA polymerase alpha chain family. Homodimer. The RNAP catalytic core consists of 2 alpha, 1 beta, 1 beta' and 1 omega subunit. When a sigma factor is associated with the core the holoenzyme is formed, which can initiate transcription.

It catalyses the reaction RNA(n) + a ribonucleoside 5'-triphosphate = RNA(n+1) + diphosphate. Functionally, DNA-dependent RNA polymerase catalyzes the transcription of DNA into RNA using the four ribonucleoside triphosphates as substrates. The sequence is that of DNA-directed RNA polymerase subunit alpha from Mycolicibacterium smegmatis (strain ATCC 700084 / mc(2)155) (Mycobacterium smegmatis).